The primary structure comprises 437 residues: Aromatic peroxidase fscJ (437 aa).

Residues 1–19 form the signal peptide; sequence MKWLHLLSVVACVADEVYA. Cys83 serves as a coordination point for heme.

It belongs to the chloroperoxidase family. The cofactor is heme b.

It functions in the pathway secondary metabolite biosynthesis. Aromatic peroxidase; part of the fragmented gene cluster that mediates the biosynthesis of fusarochromene, a tryptophan-derived metabolite closely related to a group of mycotoxins including fusarochromanone. The role of fscJ within the pathway has not been identified yet. The first step of the pathway is the epimerization of L-tryptophan to D-tryptophan in the presence of the NRPS-like tryptophan epimerase fscC. D-tryptophan is subsequently hydroxylated by the tryptophan 6-hydroxylase fscE to yield 6-hydroxytryptophan. The pyrrole ring undergoes cleavaged by the tryptophan 2,3-dioxygenase fscD and is finally converted to 4-hydroxykyrunenine by the hydrolase fscH. The NRPS-like oxidoreductase fscA reduces the carboxyl group to primary alcohol and the DMATS-type prenyltransferase fscG performs prenylation, followed by the formation of a chromene ring catalyzed by the oxidoreductase fscI, which leads to desacetylfusarochromene. Epoxidation by fscF and rearrangement reactions of chromene double bonds convert compound desacetylfusarochromene to fusarochromanones. Although specific acetyltransferases were not found near the fsc gene cluster, several predicted enzymes containing the N-acetyltransferase superfamily domain are present in the genome of F.equiseti. These predicted enzymes may have the potential to convert desacetylfusarochromene to fusarochromene. This chain is Aromatic peroxidase fscJ, found in Fusarium equiseti (Fusarium scirpi).